The following is a 689-amino-acid chain: Glycine--tRNA ligase beta subunit (689 aa).

It belongs to the class-II aminoacyl-tRNA synthetase family. Tetramer of two alpha and two beta subunits.

Its subcellular location is the cytoplasm. It catalyses the reaction tRNA(Gly) + glycine + ATP = glycyl-tRNA(Gly) + AMP + diphosphate. The chain is Glycine--tRNA ligase beta subunit from Acinetobacter baumannii (strain ATCC 17978 / DSM 105126 / CIP 53.77 / LMG 1025 / NCDC KC755 / 5377).